We begin with the raw amino-acid sequence, 319 residues long: tRNA dimethylallyltransferase (319 aa).

16–23 (GPTASGKS) is an ATP binding site. 18-23 (TASGKS) contacts substrate. The interval 46-49 (DSMV) is interaction with substrate tRNA.

It belongs to the IPP transferase family. Monomer. The cofactor is Mg(2+).

It carries out the reaction adenosine(37) in tRNA + dimethylallyl diphosphate = N(6)-dimethylallyladenosine(37) in tRNA + diphosphate. Its function is as follows. Catalyzes the transfer of a dimethylallyl group onto the adenine at position 37 in tRNAs that read codons beginning with uridine, leading to the formation of N6-(dimethylallyl)adenosine (i(6)A). This chain is tRNA dimethylallyltransferase, found in Cutibacterium acnes (strain DSM 16379 / KPA171202) (Propionibacterium acnes).